A 53-amino-acid chain; its full sequence is UPF0181 protein VC_A0569 (53 aa).

It belongs to the UPF0181 family.

This is UPF0181 protein VC_A0569 from Vibrio cholerae serotype O1 (strain ATCC 39315 / El Tor Inaba N16961).